The chain runs to 138 residues: Cysteine desulfuration protein SufE (138 aa).

Cys51 acts as the Cysteine persulfide intermediate in catalysis.

Belongs to the SufE family. As to quaternary structure, homodimer. Interacts with SufS.

It localises to the cytoplasm. It participates in cofactor biosynthesis; iron-sulfur cluster biosynthesis. Functionally, participates in cysteine desulfuration mediated by SufS. Cysteine desulfuration mobilizes sulfur from L-cysteine to yield L-alanine and constitutes an essential step in sulfur metabolism for biosynthesis of a variety of sulfur-containing biomolecules. Functions as a sulfur acceptor for SufS, by mediating the direct transfer of the sulfur atom from the S-sulfanylcysteine of SufS, an intermediate product of cysteine desulfuration process. The polypeptide is Cysteine desulfuration protein SufE (Salmonella arizonae (strain ATCC BAA-731 / CDC346-86 / RSK2980)).